The primary structure comprises 930 residues: Isoleucine--tRNA ligase (930 aa).

The 'HIGH' region motif lies at 57 to 67 (PYANGHLHLGH). Glu555 lines the L-isoleucyl-5'-AMP pocket. A 'KMSKS' region motif is present at residues 596 to 600 (KMSKS). Lys599 contributes to the ATP binding site. Residues Cys896, Cys899, Cys916, and Cys919 each contribute to the Zn(2+) site.

The protein belongs to the class-I aminoacyl-tRNA synthetase family. IleS type 1 subfamily. In terms of assembly, monomer. Zn(2+) serves as cofactor.

It localises to the cytoplasm. It carries out the reaction tRNA(Ile) + L-isoleucine + ATP = L-isoleucyl-tRNA(Ile) + AMP + diphosphate. Its function is as follows. Catalyzes the attachment of isoleucine to tRNA(Ile). As IleRS can inadvertently accommodate and process structurally similar amino acids such as valine, to avoid such errors it has two additional distinct tRNA(Ile)-dependent editing activities. One activity is designated as 'pretransfer' editing and involves the hydrolysis of activated Val-AMP. The other activity is designated 'posttransfer' editing and involves deacylation of mischarged Val-tRNA(Ile). The protein is Isoleucine--tRNA ligase of Moorella thermoacetica (strain ATCC 39073 / JCM 9320).